Consider the following 424-residue polypeptide: Serine--tRNA ligase (424 aa).

Residue 230–232 coordinates L-serine; that stretch reads TSE. ATP-binding positions include 261 to 263 and V277; that span reads RKE. E284 is an L-serine binding site. 348-351 contacts ATP; the sequence is ELTS. T382 serves as a coordination point for L-serine.

The protein belongs to the class-II aminoacyl-tRNA synthetase family. Type-1 seryl-tRNA synthetase subfamily. As to quaternary structure, homodimer. The tRNA molecule binds across the dimer.

Its subcellular location is the cytoplasm. It catalyses the reaction tRNA(Ser) + L-serine + ATP = L-seryl-tRNA(Ser) + AMP + diphosphate + H(+). The catalysed reaction is tRNA(Sec) + L-serine + ATP = L-seryl-tRNA(Sec) + AMP + diphosphate + H(+). The protein operates within aminoacyl-tRNA biosynthesis; selenocysteinyl-tRNA(Sec) biosynthesis; L-seryl-tRNA(Sec) from L-serine and tRNA(Sec): step 1/1. Functionally, catalyzes the attachment of serine to tRNA(Ser). Is also able to aminoacylate tRNA(Sec) with serine, to form the misacylated tRNA L-seryl-tRNA(Sec), which will be further converted into selenocysteinyl-tRNA(Sec). This Nocardioides sp. (strain ATCC BAA-499 / JS614) protein is Serine--tRNA ligase.